A 983-amino-acid polypeptide reads, in one-letter code: UPF0182 protein CMM_1204 (983 aa).

The next 7 membrane-spanning stretches (helical) occupy residues 16 to 36 (LAIT…FAGF), 56 to 76 (WGAG…PVFV), 108 to 128 (LAMF…ASSG), 161 to 181 (FYHA…LGVL), 205 to 225 (IQIA…IWLD), 255 to 275 (AILA…AVIG), and 281 to 301 (IIGT…YPAI). Polar residues predominate over residues 699-714 (QDLWTTPNDPTATTEA). 2 disordered regions span residues 699-718 (QDLW…GTPA) and 884-936 (DSGA…AQDV). Residues 902 to 918 (GGTGDGATDGATDGGTG) are compositionally biased toward gly residues. Over residues 919–933 (STPTPAPTTSPSAPA) the composition is skewed to low complexity.

The protein belongs to the UPF0182 family.

It localises to the cell membrane. The protein is UPF0182 protein CMM_1204 of Clavibacter michiganensis subsp. michiganensis (strain NCPPB 382).